A 430-amino-acid chain; its full sequence is Mannan endo-1,4-beta-mannosidase (430 aa).

Glu-173 functions as the Proton donor in the catalytic mechanism. The active-site Nucleophile is the Glu-269. 2 CBM10 domains span residues 357–390 (SCGTAPNGYPYCCNASSATGNGWGWENNRSCVVA) and 395–424 (SCNWYGTSYPICVNTSSGWGWENNRSCIAA).

Belongs to the glycosyl hydrolase 5 (cellulase A) family.

The enzyme catalyses Random hydrolysis of (1-&gt;4)-beta-D-mannosidic linkages in mannans, galactomannans and glucomannans.. In terms of biological role, catalyzes the endo hydrolysis of beta-1,4-linked mannan, galactomannan and glucomannan. It is able to hydrolyze mannosidic linkages that are flanked by mannose or glucose. This Cellvibrio japonicus (strain Ueda107) (Pseudomonas fluorescens subsp. cellulosa) protein is Mannan endo-1,4-beta-mannosidase.